A 330-amino-acid chain; its full sequence is Putative ADP-ribosyl glycohydrolase L543 (330 aa).

It belongs to the ADP-ribosylglycohydrolase family.

The protein is Putative ADP-ribosyl glycohydrolase L543 of Acanthamoeba polyphaga mimivirus (APMV).